The primary structure comprises 180 residues: Signaling threshold-regulating transmembrane adapter 1 (180 aa).

Residues 1–24 lie on the Extracellular side of the membrane; it reads MSRDYNCTTDDQLAWGIPSISHAW. N6 carries an N-linked (GlcNAc...) asparagine glycan. Residues 25-45 traverse the membrane as a helical; Signal-anchor for type III membrane protein segment; sequence GLWALLGVVTVLLLISLAALL. At 46 to 180 the chain is on the cytoplasmic side; that stretch reads SQWTRGRRRN…AYANSQPAPS (135 aa). 2 positions are modified to phosphoserine: S63 and S66. Y73 is modified (phosphotyrosine). Residues 73-76 form an interaction with GRB2 region; sequence YGNL. Residues 81 to 103 form a disordered region; sequence TGRLSQEPRSEEQDPPSSGGLAR. Residues S85 and S90 each carry the phosphoserine modification. A phosphotyrosine mark is found at Y111, Y132, and Y153. An interaction with PTPN11 region spans residues 130–135; it reads IKYCEV. Residues 153-156 are interaction with CSK; sequence YASV. A Phosphoserine modification is found at S166. Y172 carries the phosphotyrosine modification. The interval 172 to 175 is interaction with GRB2; the sequence is YANS.

Homodimer; disulfide-linked. When phosphorylated, interacts with PTPN11/SHP2, GRB2 and CSK. In terms of processing, phosphorylated on tyrosines upon TCR activation; which leads to the recruitment of PTPN11, GRB2 and CSK. Expressed in thymus and spleen, with highest levels in immature thymocytes (at protein level).

It localises to the cell membrane. Functionally, negatively regulates T-cell antigen receptor (TCR)-mediated signaling. Involved in positive selection of T-cells. In Mus musculus (Mouse), this protein is Signaling threshold-regulating transmembrane adapter 1 (Sit1).